Reading from the N-terminus, the 572-residue chain is Adenine deaminase (572 aa).

Belongs to the metallo-dependent hydrolases superfamily. Adenine deaminase family. It depends on Mn(2+) as a cofactor.

It catalyses the reaction adenine + H2O + H(+) = hypoxanthine + NH4(+). This is Adenine deaminase from Clostridium perfringens (strain 13 / Type A).